The sequence spans 174 residues: MAAANRGSKPRVRSIRFAAGHDAEGSQSHVHFDEKLHDSVVMVTQESDNSFLVKVGFLKILHRYEITFTLPAVRRLSKDIREAPVHSLHLKLLSVTPIPEGYSIKCEYSAHKEGVLKEEMLLACEGDIGTCVHVTVQARVMDRHHGTPMLLDGVKCVGAELEYDSEHSDWHGFD.

Ala-2 carries the N-acetylalanine modification. At Thr-147 the chain carries Phosphothreonine.

This sequence belongs to the ADISSP family.

It is found in the secreted. Functionally, adipocyte-secreted protein (adipokine) that acts as a key regulator for white adipose tissue (WAT) thermogenesis and glucose homeostasis at least in part through activation of protein kinase A (PKA). The polypeptide is Adipose-secreted signaling protein (Rattus norvegicus (Rat)).